A 238-amino-acid polypeptide reads, in one-letter code: Ribonuclease PH (238 aa).

Phosphate-binding positions include Arg-86 and 124–126 (GTR).

Belongs to the RNase PH family. In terms of assembly, homohexameric ring arranged as a trimer of dimers.

It catalyses the reaction tRNA(n+1) + phosphate = tRNA(n) + a ribonucleoside 5'-diphosphate. Its function is as follows. Phosphorolytic 3'-5' exoribonuclease that plays an important role in tRNA 3'-end maturation. Removes nucleotide residues following the 3'-CCA terminus of tRNAs; can also add nucleotides to the ends of RNA molecules by using nucleoside diphosphates as substrates, but this may not be physiologically important. Probably plays a role in initiation of 16S rRNA degradation (leading to ribosome degradation) during starvation. The chain is Ribonuclease PH from Alkalilimnicola ehrlichii (strain ATCC BAA-1101 / DSM 17681 / MLHE-1).